The following is a 342-amino-acid chain: Holliday junction branch migration complex subunit RuvB (342 aa).

The tract at residues 1 to 181 is large ATPase domain (RuvB-L); sequence MENRMVTPFD…FGMLCAMEFY (181 aa). ATP-binding positions include Leu20, Arg21, Gly62, Lys65, Thr66, Thr67, 128-130, Arg171, Tyr181, and Arg218; that span reads EDY. Thr66 is a binding site for Mg(2+). The tract at residues 182-252 is small ATPAse domain (RuvB-S); the sequence is TDEELMEIVV…GAKAALDLLE (71 aa). A head domain (RuvB-H) region spans residues 255–342; it reads KEGLDKIDNK…KDNQVSIFNK (88 aa). Arg310 and Arg315 together coordinate DNA.

The protein belongs to the RuvB family. Homohexamer. Forms an RuvA(8)-RuvB(12)-Holliday junction (HJ) complex. HJ DNA is sandwiched between 2 RuvA tetramers; dsDNA enters through RuvA and exits via RuvB. An RuvB hexamer assembles on each DNA strand where it exits the tetramer. Each RuvB hexamer is contacted by two RuvA subunits (via domain III) on 2 adjacent RuvB subunits; this complex drives branch migration. In the full resolvosome a probable DNA-RuvA(4)-RuvB(12)-RuvC(2) complex forms which resolves the HJ.

The protein resides in the cytoplasm. The enzyme catalyses ATP + H2O = ADP + phosphate + H(+). In terms of biological role, the RuvA-RuvB-RuvC complex processes Holliday junction (HJ) DNA during genetic recombination and DNA repair, while the RuvA-RuvB complex plays an important role in the rescue of blocked DNA replication forks via replication fork reversal (RFR). RuvA specifically binds to HJ cruciform DNA, conferring on it an open structure. The RuvB hexamer acts as an ATP-dependent pump, pulling dsDNA into and through the RuvAB complex. RuvB forms 2 homohexamers on either side of HJ DNA bound by 1 or 2 RuvA tetramers; 4 subunits per hexamer contact DNA at a time. Coordinated motions by a converter formed by DNA-disengaged RuvB subunits stimulates ATP hydrolysis and nucleotide exchange. Immobilization of the converter enables RuvB to convert the ATP-contained energy into a lever motion, pulling 2 nucleotides of DNA out of the RuvA tetramer per ATP hydrolyzed, thus driving DNA branch migration. The RuvB motors rotate together with the DNA substrate, which together with the progressing nucleotide cycle form the mechanistic basis for DNA recombination by continuous HJ branch migration. Branch migration allows RuvC to scan DNA until it finds its consensus sequence, where it cleaves and resolves cruciform DNA. The polypeptide is Holliday junction branch migration complex subunit RuvB (Clostridium botulinum (strain ATCC 19397 / Type A)).